Consider the following 175-residue polypeptide: Translation initiation factor IF-3 (175 aa).

Belongs to the IF-3 family. Monomer.

It localises to the cytoplasm. Its function is as follows. IF-3 binds to the 30S ribosomal subunit and shifts the equilibrium between 70S ribosomes and their 50S and 30S subunits in favor of the free subunits, thus enhancing the availability of 30S subunits on which protein synthesis initiation begins. In Staphylococcus aureus (strain NCTC 8325 / PS 47), this protein is Translation initiation factor IF-3.